Consider the following 81-residue polypeptide: Conotoxin Vc6.13 (81 aa).

Residues 1 to 19 (MEKLTILLLVAAVLMSIQA) form the signal peptide. Residues 20 to 44 (LNQEQHQRAKINLLSKRKAPAERWW) constitute a propeptide that is removed on maturation. Intrachain disulfides connect cysteine 49-cysteine 63, cysteine 56-cysteine 67, and cysteine 62-cysteine 72.

Belongs to the conotoxin O2 superfamily. Expressed by the venom duct.

It localises to the secreted. Inhibits voltage-gated ion channels. The protein is Conotoxin Vc6.13 of Conus victoriae (Queen Victoria cone).